A 509-amino-acid chain; its full sequence is Histone deacetylase 2 (509 aa).

A histone deacetylase region spans residues 24–338 (RRVCYFYDPE…WCYETGVALG (315 aa)). Catalysis depends on histidine 158, which acts as the Proton donor/acceptor. The Zn(2+) site is built by aspartate 193, histidine 195, and aspartate 281. Positions 394-509 (PSVQFEERIP…NAKNEPGSSL (116 aa)) are disordered. Composition is skewed to basic and acidic residues over residues 398–409 (FEERIPETKLPE), 418–434 (DERH…DHKP), and 448–472 (VKRE…HKVP). Residues 481-494 (SSKQVPTADANSMA) are compositionally biased toward polar residues.

This sequence belongs to the histone deacetylase family. HD Type 1 subfamily. It depends on Zn(2+) as a cofactor. In terms of tissue distribution, expressed in roots.

It is found in the nucleus. It carries out the reaction N(6)-acetyl-L-lysyl-[histone] + H2O = L-lysyl-[histone] + acetate. Responsible for the deacetylation of lysine residues on the N-terminal part of the core histones (H2A, H2B, H3 and H4). Histone deacetylation gives a tag for epigenetic repression and plays an important role in transcriptional regulation, cell cycle progression and developmental events. Histone deacetylases act via the formation of large multiprotein complexes. The chain is Histone deacetylase 2 from Oryza sativa subsp. japonica (Rice).